A 268-amino-acid chain; its full sequence is Indole-3-glycerol phosphate synthase (268 aa).

The protein belongs to the TrpC family.

It catalyses the reaction 1-(2-carboxyphenylamino)-1-deoxy-D-ribulose 5-phosphate + H(+) = (1S,2R)-1-C-(indol-3-yl)glycerol 3-phosphate + CO2 + H2O. The protein operates within amino-acid biosynthesis; L-tryptophan biosynthesis; L-tryptophan from chorismate: step 4/5. This Lachnospira eligens (strain ATCC 27750 / DSM 3376 / VPI C15-48 / C15-B4) (Eubacterium eligens) protein is Indole-3-glycerol phosphate synthase.